Consider the following 368-residue polypeptide: Glutamate 5-kinase (368 aa).

Position 13 (Lys13) interacts with ATP. 3 residues coordinate substrate: Ser54, Asp141, and Asn153. Residue 173–174 (SD) participates in ATP binding. The PUA domain maps to 278-355 (KGSLRLDAGA…DEIPEILGYP (78 aa)).

Belongs to the glutamate 5-kinase family.

It localises to the cytoplasm. The enzyme catalyses L-glutamate + ATP = L-glutamyl 5-phosphate + ADP. Its pathway is amino-acid biosynthesis; L-proline biosynthesis; L-glutamate 5-semialdehyde from L-glutamate: step 1/2. Its function is as follows. Catalyzes the transfer of a phosphate group to glutamate to form L-glutamate 5-phosphate. The sequence is that of Glutamate 5-kinase from Jannaschia sp. (strain CCS1).